The chain runs to 278 residues: NADPH-dependent 7-cyano-7-deazaguanine reductase (278 aa).

Residue 87-89 coordinates substrate; it reads IES. Position 89 to 90 (89 to 90) interacts with NADPH; sequence SK. Cys185 functions as the Thioimide intermediate in the catalytic mechanism. Asp192 serves as the catalytic Proton donor. 224–225 is a substrate binding site; sequence HE. 253 to 254 contacts NADPH; that stretch reads RG. The tract at residues 255–278 is disordered; that stretch reads GLDINPYRSTNPTFSVQNHRSFRQ. The segment covering 261–278 has biased composition (polar residues); it reads YRSTNPTFSVQNHRSFRQ.

The protein belongs to the GTP cyclohydrolase I family. QueF type 2 subfamily. Homodimer.

It localises to the cytoplasm. The enzyme catalyses 7-aminomethyl-7-carbaguanine + 2 NADP(+) = 7-cyano-7-deazaguanine + 2 NADPH + 3 H(+). Its pathway is tRNA modification; tRNA-queuosine biosynthesis. In terms of biological role, catalyzes the NADPH-dependent reduction of 7-cyano-7-deazaguanine (preQ0) to 7-aminomethyl-7-deazaguanine (preQ1). This chain is NADPH-dependent 7-cyano-7-deazaguanine reductase, found in Coxiella burnetii (strain CbuK_Q154) (Coxiella burnetii (strain Q154)).